Consider the following 457-residue polypeptide: MNQNPVEEGQKFPLTIRRMGINGEGIGYFKKAVVFVPGAITGEEVVVEAVKVRDRFTEAKLNKIRKKSPNRVTAPCPVYEACGGCQLQHVAYNAQLELKRDIVIQSIEKHTKIDPAKLKIRPTIGMEDPWRYRNKSQFQTRMVGSGQVETGLFGANSHQLVPIEDCIVQQPVTIKVTNFVRDLLEKYGVPIYDEKAGSGIIRTIVVRTGVKTGETQLVFITNSKKLPKKREMLAEIEAALPEVTSIMQNVNQAKSSLIFGDETFLLAGKESIEEKLMELEFDLSARAFFQLNPFQTERLYQEVEKALVLTGSETLVDAYCGVGTIGQAFAGKVKEVRGMDIIPESIEDAKRNAEKNGIDNVYYEVGKAEDVLPKWVKEGFRPDAVIVDPPRSGCDQGLIKSLLQVEAKQLVYVSCNPSTLARDLALLAKKYQIRYMQPVDMFPQTAHVETVTLLQRR.

Residues 5 to 63 (PVEEGQKFPLTIRRMGINGEGIGYFKKAVVFVPGAITGEEVVVEAVKVRDRFTEAKLNK) enclose the TRAM domain. [4Fe-4S] cluster contacts are provided by Cys76, Cys82, Cys85, and Cys166. Gln290, Tyr319, Asp340, and Asp388 together coordinate S-adenosyl-L-methionine. Cys415 acts as the Nucleophile in catalysis.

Belongs to the class I-like SAM-binding methyltransferase superfamily. RNA M5U methyltransferase family.

This is an uncharacterized protein from Listeria innocua serovar 6a (strain ATCC BAA-680 / CLIP 11262).